Here is a 138-residue protein sequence, read N- to C-terminus: Lymphocyte antigen 6L (138 aa).

An N-terminal signal peptide occupies residues 1 to 16 (MERLVLTLCTLPLAVA). An N-linked (GlcNAc...) asparagine glycan is attached at N27. In terms of domain architecture, UPAR/Ly6 spans 28-122 (LSCYQCFKVS…TPQEGRWALR (95 aa)). Disulfide bonds link C30–C47 and C103–C108. G117 carries GPI-anchor amidated glycine lipidation. A propeptide spans 118–138 (RWALRGGLLLQVGLSLLRALL) (removed in mature form).

The protein resides in the cell membrane. This Homo sapiens (Human) protein is Lymphocyte antigen 6L.